We begin with the raw amino-acid sequence, 269 residues long: Putative aga operon transcriptional repressor (269 aa).

Positions 15–70 constitute an HTH deoR-type domain; the sequence is TSERREQIIQRLRQQGSVQVNDLSALYGVSTVTIRNDLAFLEKQGIAVRAYGGALI. The H-T-H motif DNA-binding region spans 32-51; the sequence is VQVNDLSALYGVSTVTIRND.

Functionally, probable repressor for the aga operon for N-acetyl galactosamine transport and metabolism. This chain is Putative aga operon transcriptional repressor (agaR), found in Escherichia coli O157:H7.